The sequence spans 328 residues: Ferredoxin--NADP reductase (328 aa).

FAD-binding residues include S14, E33, Q41, Y46, I90, and F126.

It belongs to the ferredoxin--NADP reductase type 2 family. As to quaternary structure, homodimer. FAD serves as cofactor.

It catalyses the reaction 2 reduced [2Fe-2S]-[ferredoxin] + NADP(+) + H(+) = 2 oxidized [2Fe-2S]-[ferredoxin] + NADPH. The sequence is that of Ferredoxin--NADP reductase from Mycoplasmoides gallisepticum (strain R(low / passage 15 / clone 2)) (Mycoplasma gallisepticum).